We begin with the raw amino-acid sequence, 546 residues long: Plastidic glucose transporter 4 (546 aa).

Transmembrane regions (helical) follow at residues 105-125 (VLPFVGVACLGAILFGYHLGV), 148-168 (WIVSSLLAGATVGSFTGGALA), 182-202 (IPLAIGAFLCATAQSVQTMIV), 205-225 (LLAGIGIGISSAIVPLYISEI), 240-260 (LFICIGILAALIAGLPLAANP), 265-285 (TMFGVAVIPSVLLAIGMAFSP), 345-365 (VVSVGAALFLFQQLAGINAVV), 381-401 (VAASALVGASNVFGTAVASSL), 410-430 (LLLTSFGGMALSMLLLSLSFT), 441-461 (LAVVGTVLYVLSFSLGAGPVP), 477-497 (AVALSLGMHWISNFVIGLYFL), and 503-523 (FGISSVYLGFAGVCVLAVLYI).

This sequence belongs to the major facilitator superfamily. Sugar transporter (TC 2.A.1.1) family.

The protein localises to the plastid. Its subcellular location is the chloroplast inner membrane. Its function is as follows. May be involved in the efflux of glucose towards the cytosol. The sequence is that of Plastidic glucose transporter 4 from Arabidopsis thaliana (Mouse-ear cress).